The following is a 313-amino-acid chain: Porphobilinogen deaminase (313 aa).

Position 242 is an S-(dipyrrolylmethanemethyl)cysteine (C242).

This sequence belongs to the HMBS family. Monomer. The cofactor is dipyrromethane.

It catalyses the reaction 4 porphobilinogen + H2O = hydroxymethylbilane + 4 NH4(+). It participates in porphyrin-containing compound metabolism; protoporphyrin-IX biosynthesis; coproporphyrinogen-III from 5-aminolevulinate: step 2/4. Its function is as follows. Tetrapolymerization of the monopyrrole PBG into the hydroxymethylbilane pre-uroporphyrinogen in several discrete steps. This is Porphobilinogen deaminase from Escherichia coli (strain K12 / MC4100 / BW2952).